We begin with the raw amino-acid sequence, 259 residues long: Phosphatidylglycerol--prolipoprotein diacylglyceryl transferase (259 aa).

4 consecutive transmembrane segments (helical) span residues 9 to 29 (IIFSIGPLAISWYSLSYVIGI), 55 to 75 (FITYAVIGIIVGGRLGFVLLY), 92 to 112 (EGGMSFHGGALGGIITAYLFC), and 117 to 137 (INFLSLTDIIAPVVPIGLFLG). A 1,2-diacyl-sn-glycero-3-phospho-(1'-sn-glycerol) is bound at residue arginine 138. 3 consecutive transmembrane segments (helical) span residues 172–192 (QLYEAFFEGLVLFSILAYTTF), 201–221 (GLNSGIFFTFYGLFRITIEIF), and 228–248 (IGFILDSLTMGQILSVPMLLL).

This sequence belongs to the Lgt family.

The protein resides in the cell inner membrane. It catalyses the reaction L-cysteinyl-[prolipoprotein] + a 1,2-diacyl-sn-glycero-3-phospho-(1'-sn-glycerol) = an S-1,2-diacyl-sn-glyceryl-L-cysteinyl-[prolipoprotein] + sn-glycerol 1-phosphate + H(+). Its pathway is protein modification; lipoprotein biosynthesis (diacylglyceryl transfer). Functionally, catalyzes the transfer of the diacylglyceryl group from phosphatidylglycerol to the sulfhydryl group of the N-terminal cysteine of a prolipoprotein, the first step in the formation of mature lipoproteins. In Rickettsia africae (strain ESF-5), this protein is Phosphatidylglycerol--prolipoprotein diacylglyceryl transferase.